The chain runs to 1177 residues: Tyrosine-protein kinase hopscotch (1177 aa).

Positions 1 to 41 (MALANGGEDRMDDSSSGRTSLADSASLTNSSLRSGTSSQSI) are disordered. Positions 16-41 (SGRTSLADSASLTNSSLRSGTSSQSI) are enriched in polar residues. Phosphoserine occurs at positions 40 and 321. The FERM domain maps to 46 to 414 (GTIRVFNFTT…IYIRLSSKWM (369 aa)). The SH2; atypical domain occupies 433–539 (HCHGPIGGAY…YRIPASKYDK (107 aa)). Protein kinase domains follow at residues 582-843 (YPDS…AEIL) and 892-1164 (YNME…HPTD). Residues 898-906 (IGRGHYGTV) and Lys-926 each bind ATP. Asp-1014 serves as the catalytic Proton acceptor. Residues Tyr-1047 and Tyr-1048 each carry the phosphotyrosine; by autocatalysis modification. Residues 1158-1177 (KVTHPTDGHQSPPNQPTDAE) are disordered.

The protein belongs to the protein kinase superfamily. Tyr protein kinase family. JAK subfamily. Forms a complex with Hsp83 and piwi; probably Hop mediates the interaction between piwi and Hsp83.

It is found in the endomembrane system. The catalysed reaction is L-tyrosyl-[protein] + ATP = O-phospho-L-tyrosyl-[protein] + ADP + H(+). Functionally, tyrosine kinase of the non-receptor type, phosphorylates the marelle protein. Required maternally for the establishment of the normal array of embryonic segments: involved in the control of pair-rule gene transcription in a stripe-specific manner. Together with Hsp83 and piwi, mediates canalization, also known as developmental robustness, likely via epigenetic silencing of existing genetic variants and suppression of transposon-induced new genetic variation. This chain is Tyrosine-protein kinase hopscotch (hop), found in Drosophila melanogaster (Fruit fly).